Reading from the N-terminus, the 1405-residue chain is DNA-directed RNA polymerase subunit beta' (1405 aa).

Zn(2+) is bound by residues Cys-70, Cys-72, Cys-85, and Cys-88. 3 residues coordinate Mg(2+): Asp-460, Asp-462, and Asp-464. 4 residues coordinate Zn(2+): Cys-815, Cys-890, Cys-897, and Cys-900.

Belongs to the RNA polymerase beta' chain family. In terms of assembly, the RNAP catalytic core consists of 2 alpha, 1 beta, 1 beta' and 1 omega subunit. When a sigma factor is associated with the core the holoenzyme is formed, which can initiate transcription. The cofactor is Mg(2+). Requires Zn(2+) as cofactor.

The enzyme catalyses RNA(n) + a ribonucleoside 5'-triphosphate = RNA(n+1) + diphosphate. DNA-dependent RNA polymerase catalyzes the transcription of DNA into RNA using the four ribonucleoside triphosphates as substrates. The polypeptide is DNA-directed RNA polymerase subunit beta' (Xanthomonas campestris pv. campestris (strain 8004)).